Reading from the N-terminus, the 312-residue chain is Small ribosomal subunit biogenesis GTPase RsgA (312 aa).

A CP-type G domain is found at 86–245 (QSFLKRPAVA…LADTPGFNRP (160 aa)). GTP-binding positions include 135–138 (TKID) and 187–195 (GPSGVGKTS). 4 residues coordinate Zn(2+): Cys-270, Cys-275, His-277, and Cys-283.

The protein belongs to the TRAFAC class YlqF/YawG GTPase family. RsgA subfamily. As to quaternary structure, monomer. Associates with 30S ribosomal subunit, binds 16S rRNA. Zn(2+) serves as cofactor.

The protein resides in the cytoplasm. One of several proteins that assist in the late maturation steps of the functional core of the 30S ribosomal subunit. Helps release RbfA from mature subunits. May play a role in the assembly of ribosomal proteins into the subunit. Circularly permuted GTPase that catalyzes slow GTP hydrolysis, GTPase activity is stimulated by the 30S ribosomal subunit. In Prochlorococcus marinus (strain NATL1A), this protein is Small ribosomal subunit biogenesis GTPase RsgA.